A 419-amino-acid chain; its full sequence is Gustatory receptor for sugar taste 64c (419 aa).

Residues 1-15 (MQQSGQKGTRNTLQH) lie on the Cytoplasmic side of the membrane. The chain crosses the membrane as a helical span at residues 16–36 (AIGPVLVIAQFFGVLPVAGVW). At 37–48 (PSCRPERVRFRW) the chain is on the extracellular side. A helical membrane pass occupies residues 49 to 69 (ISLSLLAALILFVFSIVDCAL). The Cytoplasmic segment spans residues 70-82 (SSKVVFDHGLKIY). A helical transmembrane segment spans residues 83 to 103 (TIGSLSFSVICIFCFGVFLLL). The Extracellular segment spans residues 104 to 139 (SRRWPYIIRRTAECEQIFLEPEYDCSYGRGYSSRLR). Residues 140–160 (LWGVCMLVAALCEHSTYVGSA) traverse the membrane as a helical segment. Residues 161-204 (LYNNHLAIVECKLDANFWQNYFQRERQQLFLIMHFTAWWIPFIE) lie on the Cytoplasmic side of the membrane. The chain crosses the membrane as a helical span at residues 205–225 (WTTLSMTFVWNFVDIFLILIC). At 226–305 (RGMQMRFQQM…FQSKGNYADE (80 aa)) the chain is on the extracellular side. A helical membrane pass occupies residues 306–326 (LYFWFCLSYVIIRVLNMMFAA). Over 327 to 377 (SSIPQEAKEISYTLYEIPTEFWCVELRRLNEIFLSDHFALSGKGYFLLTRR) the chain is Cytoplasmic. A helical transmembrane segment spans residues 378–398 (LIFAMAATLMVYELVLINQMA). Residues 399-419 (GSEVQKSFCEGGVGSSKSIFS) lie on the Extracellular side of the membrane.

Belongs to the insect chemoreceptor superfamily. Gustatory receptor (GR) family. Gr5a subfamily. Expressed in Gr5a-expressing sugar-sensing cells.

It is found in the cell membrane. In terms of biological role, one of the few identified sugar gustatory receptors identified so far and which promotes the starvation-induced increase of feeding motivation. The polypeptide is Gustatory receptor for sugar taste 64c (Gr64c) (Drosophila melanogaster (Fruit fly)).